Here is a 683-residue protein sequence, read N- to C-terminus: Transforming growth factor-beta-induced protein ig-h3 (683 aa).

A signal peptide spans 1–23 (MALFVRLLALALALALGPAATLA). Position 37 is a phosphoserine (Ser-37). Positions 45-99 (GPNVCAVQKVIGTNRKYFTNCKQWYQRKICGKSTVISYECCPGYEKVPGERSCPA) constitute an EMI domain. 5 cysteine pairs are disulfide-bonded: Cys-49–Cys-85, Cys-74–Cys-339, Cys-84–Cys-97, Cys-214–Cys-317, and Cys-473–Cys-478. Cys-65 carries the post-translational modification S-cysteinyl cysteine. FAS1 domains lie at 103-236 (LANL…DKVI), 240-371 (TNNI…DELL), 375-498 (SAKT…DRML), and 502-632 (SGTV…TSVL). The Cell attachment site signature appears at 642–644 (RGD).

As to quaternary structure, binds to type I, II, and IV collagens. Gamma-carboxylation is controversial. Gamma-carboxyglutamated; gamma-carboxyglutamate residues are formed by vitamin K dependent carboxylation; this may be required for calcium binding. According to a more recent report, does not contain vitamin K-dependent gamma-carboxyglutamate residues. Post-translationally, the EMI domain contains 2 expected intradomain disulfide bridges (Cys-49-Cys85 and Cys-84-Cys-97) and one unusual interdomain disulfide bridge to the second FAS1 domain (Cys-74-Cys-339). This arrangement violates the predicted disulfide bridge pattern of an EMI domain. As to expression, located primarily in the epithelium of normal adult cornea, in fetal stromal cells, and both endothelium- and stroma-derived cells in healing corneal wounds. Not expressed in normal adult endothelium and stroma.

It localises to the secreted. The protein localises to the extracellular space. Its subcellular location is the extracellular matrix. Functionally, plays a role in cell adhesion. May play a role in cell-collagen interactions. In Oryctolagus cuniculus (Rabbit), this protein is Transforming growth factor-beta-induced protein ig-h3 (TGFBI).